Here is a 720-residue protein sequence, read N- to C-terminus: Photosystem I P700 chlorophyll a apoprotein A1 (720 aa).

The next 8 membrane-spanning stretches (helical) occupy residues 61-84, 147-170, 186-210, 282-300, 337-360, 376-402, 424-446, and 522-540; these read VFSA…FHGA, LYCT…FHYH, LNHH…HVSL, TAHH…GHMY, WHAQ…HHMY, LSLF…IFMV, AIVS…LYIH, and FLVH…LILL. [4Fe-4S] cluster-binding residues include cysteine 564 and cysteine 573. Transmembrane regions (helical) follow at residues 580–601 and 655–677; these read HVFL…HFSW and LSAY…MFLF. Histidine 666 serves as a coordination point for chlorophyll a'. Chlorophyll a is bound by residues methionine 674 and tyrosine 682. Position 683 (tryptophan 683) interacts with phylloquinone. The chain crosses the membrane as a helical span at residues 715–720; it reads AVGVAH.

It belongs to the PsaA/PsaB family. In terms of assembly, the PsaA/B heterodimer binds the P700 chlorophyll special pair and subsequent electron acceptors. PSI consists of a core antenna complex that captures photons, and an electron transfer chain that converts photonic excitation into a charge separation. The eukaryotic PSI reaction center is composed of at least 11 subunits. It depends on P700 is a chlorophyll a/chlorophyll a' dimer, A0 is one or more chlorophyll a, A1 is one or both phylloquinones and FX is a shared 4Fe-4S iron-sulfur center. as a cofactor.

The protein resides in the plastid. The protein localises to the chloroplast thylakoid membrane. It carries out the reaction reduced [plastocyanin] + hnu + oxidized [2Fe-2S]-[ferredoxin] = oxidized [plastocyanin] + reduced [2Fe-2S]-[ferredoxin]. Its function is as follows. PsaA and PsaB bind P700, the primary electron donor of photosystem I (PSI), as well as the electron acceptors A0, A1 and FX. PSI is a plastocyanin-ferredoxin oxidoreductase, converting photonic excitation into a charge separation, which transfers an electron from the donor P700 chlorophyll pair to the spectroscopically characterized acceptors A0, A1, FX, FA and FB in turn. Oxidized P700 is reduced on the lumenal side of the thylakoid membrane by plastocyanin. This chain is Photosystem I P700 chlorophyll a apoprotein A1, found in Sequoia sempervirens (California redwood).